The sequence spans 444 residues: MSYSRGGTLVTLLLLLVVASSLALTANANSFESLLQLPRRQSRSTRPRSERLLHVGNFGAKGNGVTDDTKAFADAWKTACSSKVKTRILVPENYTCLLRPIDLSGPCKARLTLQISGTIIAPNDPDVWEGLNRRKWLYFHGLSRLTVEGGGTVNGMGQEWWERSCKHNHSNPCRGAPTALTFHKCKNMRVENLNVIDSQQMHIALTSCRRVTISGLKVIAPATSPNTDGIHISVSRGIVIDNTTVSTGDDCISIVKNSTQISISNIICGPGHGISIGSLGKSKSWEEVRDITVDTAIISDTANGVRIKTWQGGSGLVSKIIFRNIKMNNVSNPIIIDQYYCDSRKPCANQTSAISIENISFVHVRGTSASKEAIKISCSDSSPCRNILLQDIDLEPSNGDGFTESFCWEAYGSSSGQVYPPPCLSDDTSFLEQSVQSGITSAYL.

Residues 1–28 form the signal peptide; it reads MSYSRGGTLVTLLLLLVVASSLALTANA. PbH1 repeat units lie at residues 208–234, 235–256, 258–278, 288–309, 317–338, and 351–378; these read CRRV…HISV, SRGI…SIVK, STQI…SIGS, VRDI…RIKT, VSKI…IIDQ, and TSAI…KISC. D249 (proton donor) is an active-site residue. The active site involves H272.

This sequence belongs to the glycosyl hydrolase 28 family. As to expression, expressed in young, mature and dehiscing anthers. Found in stems, but not in roots or in abscission zone of floral organs.

The protein localises to the secreted. It localises to the cell wall. The enzyme catalyses (1,4-alpha-D-galacturonosyl)n+m + H2O = (1,4-alpha-D-galacturonosyl)n + (1,4-alpha-D-galacturonosyl)m.. This Arabidopsis thaliana (Mouse-ear cress) protein is Probable polygalacturonase At1g80170.